A 251-amino-acid chain; its full sequence is Metallo-beta-lactamase domain-containing protein 1 (251 aa).

Positions 118, 120, 122, 123, 173, 196, and 235 each coordinate Zn(2+).

This sequence belongs to the metallo-beta-lactamase superfamily. Glyoxalase II family. As to quaternary structure, homodimer. Zn(2+) is required as a cofactor.

It localises to the cytoplasm. Its subcellular location is the cytosol. The protein localises to the nucleus. It carries out the reaction a ribonucleotidyl-ribonucleotide-RNA + H2O = a 3'-end ribonucleotide-RNA + a 5'-end 5'-phospho-ribonucleoside-RNA + H(+). Endoribonuclease that catalyzes the hydrolysis of histone-coding pre-mRNA 3'-end. Involved in histone pre-mRNA processing during the S-phase of the cell cycle, which is required for entering/progressing through S-phase. Cleaves histone pre-mRNA at a major and a minor cleavage site after the 5'-ACCCA-3' and the 5'-ACCCACA-3' sequence, respectively, and located downstream of the stem-loop. May require the presence of the HDE element located at the histone pre-RNA 3'-end to avoid non-specific cleavage. The sequence is that of Metallo-beta-lactamase domain-containing protein 1 (Mblac1) from Rattus norvegicus (Rat).